The chain runs to 201 residues: MCAAGLAAAAAQSVYAFSARQLAGGEPVSLGSLRCKGLLIENVASLUGTTVRDYTQMNEPQRRLGPRGLVVLGFPCNHSGHQENAKNEEILNSLKYVRPGGGFEPNFMLFEKGEVNGAGAHTLFAFLREALPAPSDDATALMIDPKLITWSPVCRNDVAWNFEKFLVGPDGVPLRRYSRRFQTIDIEPDIEALLSQGPSCA.

Residue Ser32 is modified to Phosphoserine. Sec47 is a catalytic residue. Sec47 is a non-standard amino acid (selenocysteine). N6-acetyllysine; alternate occurs at positions 86, 112, and 146. Lys86, Lys112, and Lys146 each carry N6-succinyllysine; alternate. 2 positions are modified to phosphoserine: Ser195 and Ser199.

The protein belongs to the glutathione peroxidase family. As to quaternary structure, homotetramer. Interacts with MIEN1. Post-translationally, during periods of oxidative stress, Sec-47 may react with a superoxide radical, irreversibly lose hydroselenide and be converted to dehydroalanine.

The protein resides in the cytoplasm. Its subcellular location is the mitochondrion. It catalyses the reaction 2 glutathione + H2O2 = glutathione disulfide + 2 H2O. It carries out the reaction a hydroperoxy polyunsaturated fatty acid + 2 glutathione = a hydroxy polyunsaturated fatty acid + glutathione disulfide + H2O. The enzyme catalyses tert-butyl hydroperoxide + 2 glutathione = tert-butanol + glutathione disulfide + H2O. The catalysed reaction is cumene hydroperoxide + 2 glutathione = 2-phenylpropan-2-ol + glutathione disulfide + H2O. It catalyses the reaction (13S)-hydroperoxy-(9Z,11E)-octadecadienoate + 2 glutathione = (13S)-hydroxy-(9Z,11E)-octadecadienoate + glutathione disulfide + H2O. It carries out the reaction (9S)-hydroperoxy-(10E,12Z)-octadecadienoate + 2 glutathione = (9S)-hydroxy-(10E,12Z)-octadecadienoate + glutathione disulfide + H2O. The enzyme catalyses (5S)-hydroperoxy-(6E,8Z,11Z,14Z)-eicosatetraenoate + 2 glutathione = (5S)-hydroxy-(6E,8Z,11Z,14Z)-eicosatetraenoate + glutathione disulfide + H2O. The catalysed reaction is (12S)-hydroperoxy-(5Z,8Z,10E,14Z)-eicosatetraenoate + 2 glutathione = (12S)-hydroxy-(5Z,8Z,10E,14Z)-eicosatetraenoate + glutathione disulfide + H2O. It catalyses the reaction (12R)-hydroperoxy-(5Z,8Z,10E,14Z)-eicosatetraenoate + 2 glutathione = (12R)-hydroxy-(5Z,8Z,10E,14Z)-eicosatetraenoate + glutathione disulfide + H2O. It carries out the reaction (15S)-hydroperoxy-(5Z,8Z,11Z,13E)-eicosatetraenoate + 2 glutathione = (15S)-hydroxy-(5Z,8Z,11Z,13E)-eicosatetraenoate + glutathione disulfide + H2O. The enzyme catalyses (5S)-hydroperoxy-(6E,8Z,11Z,14Z,17Z)-eicosapentaenoate + 2 glutathione = (5S)-hydroxy-(6E,8Z,11Z,14Z,17Z)-eicosapentaenoate + glutathione disulfide + H2O. The catalysed reaction is (12S)-hydroperoxy-(5Z,8Z,10E,14Z,17Z)-eicosapentaenoate + 2 glutathione = (12S)-hydroxy-(5Z,8Z,10E,14Z,17Z)-eicosapentaenoate + glutathione disulfide + H2O. It catalyses the reaction (15S)-hydroperoxy-(5Z,8Z,11Z,13E,17Z)-eicosapentaenoate + 2 glutathione = (15S)-hydroxy-(5Z,8Z,11Z,13E,17Z)-eicosapentaenoate + glutathione disulfide + H2O. It carries out the reaction (15S)-hydroperoxy-(11Z,13E)-eicosadienoate + 2 glutathione = (15S)-hydroxy-(11Z,13E)-eicosadienoate + glutathione disulfide + H2O. The enzyme catalyses (17S)-hydroperoxy-(4Z,7Z,10Z,13Z,15E,19Z)-docosahexaenoate + 2 glutathione = (17S)-hydroxy-(4Z,7Z,10Z,13Z,15E,19Z)-docosahexaenoate + glutathione disulfide + H2O. Its function is as follows. Catalyzes the reduction of hydroperoxides in a glutathione-dependent manner thus regulating cellular redox homeostasis. Can reduce small soluble hydroperoxides such as H2O2, cumene hydroperoxide and tert-butyl hydroperoxide, as well as several fatty acid-derived hydroperoxides. In platelets catalyzes the reduction of 12-hydroperoxyeicosatetraenoic acid, the primary product of the arachidonate 12-lipoxygenase pathway. The sequence is that of Glutathione peroxidase 1 (GPX1) from Callithrix jacchus (White-tufted-ear marmoset).